Consider the following 893-residue polypeptide: DNA endonuclease RBBP8 (893 aa).

The essential for binding to the MRN complex and for RPA focus formation on DNA damage stretch occupies residues 22–45 (ELWTKLKEYHDKEVQGLQVKVTKL). A coiled-coil region spans residues 35–84 (VQGLQVKVTKLKKERILDAQRLEEFFTKNQQLRDQQKVLQETIKILEDRL). Residues 45–160 (LKKERILDAQ…AELACEENII (116 aa)) are required for interaction with LMO4, probably by stabilizing the interaction through RPPB8 dimerization. Glycyl lysine isopeptide (Lys-Gly) (interchain with G-Cter in SUMO2) cross-links involve residues Lys-62 and Lys-115. The stretch at 117–138 (ITELMNEKNTLQEENKKLSEQL) forms a coiled coil. A Glycyl lysine isopeptide (Lys-Gly) (interchain with G-Cter in SUMO2) cross-link involves residue Lys-193. Residues Ser-233 and Ser-276 each carry the phosphoserine modification. Basic and acidic residues predominate over residues 296-307 (MESARSKEDSLR). Residues 296 to 324 (MESARSKEDSLRFSDSASKTPPQEFTTRA) form a disordered region. Residues 308 to 324 (FSDSASKTPPQEFTTRA) show a composition bias toward polar residues. At Thr-315 the chain carries Phosphothreonine. A phosphoserine mark is found at Ser-325, Ser-326, and Ser-348. Glycyl lysine isopeptide (Lys-Gly) (interchain with G-Cter in SUMO2) cross-links involve residues Lys-359 and Lys-377. Residue Ser-378 is modified to Phosphoserine. Glycyl lysine isopeptide (Lys-Gly) (interchain with G-Cter in SUMO2) cross-links involve residues Lys-394, Lys-403, Lys-409, and Lys-437. Residues 489 to 493 (PLDLS) carry the PXDLS motif motif. Residues 508–556 (NETSKNKLKQATIYEALKPIPKGSSSGRKALSGDCMPAKDSWETYCLQP) are damage-recruitment motif. Lys-525 participates in a covalent cross-link: Glycyl lysine isopeptide (Lys-Gly) (interchain with G-Cter in SUMO2); alternate. Residues Lys-529, Lys-570, and Lys-576 each participate in a glycyl lysine isopeptide (Lys-Gly) (interchain with G-Cter in SUMO2) cross-link. A Glycyl lysine isopeptide (Lys-Gly) (interchain with G-Cter in SUMO2); alternate cross-link involves residue Lys-602. Glycyl lysine isopeptide (Lys-Gly) (interchain with G-Cter in SUMO2) cross-links involve residues Lys-611, Lys-636, and Lys-638. Residues 639 to 683 (ALPSNQDTSFENIQWSVDPGADLSQYKMDVTVIDTKDSSHSRLGG) are required for interaction with LMO4, probably by making physical contact with LMO4. At Ser-662 the chain carries Phosphoserine; by ATM. Lys-674 is covalently cross-linked (Glycyl lysine isopeptide (Lys-Gly) (interchain with G-Cter in SUMO2)). Ser-677 carries the phosphoserine modification. Lys-716 participates in a covalent cross-link: Glycyl lysine isopeptide (Lys-Gly) (interchain with G-Cter in SUMO2). Ser-720 carries the post-translational modification Phosphoserine. Ser-742 carries the phosphoserine; by ATM modification. Residue Lys-778 forms a Glycyl lysine isopeptide (Lys-Gly) (interchain with G-Cter in SUMO2) linkage. The short motif at 836-838 (FRY) is the KLHL15-binding element. Thr-843 and Thr-855 each carry phosphothreonine. A Glycyl lysine isopeptide (Lys-Gly) (interchain with G-Cter in SUMO2) cross-link involves residue Lys-865. Residues 869 to 893 (DLSPRPKRRQPYNAVFSPKGKEQRT) are disordered.

This sequence belongs to the COM1/SAE2/CtIP family. In terms of assembly, homotetramer; formed by antiparallel association of helical extensions protruding from the N-termini of two parallel coiled-coil dimers. Forms a dumbbell-shaped particle in which polar globular domains are held about 30 nm apart by a central rod. Homotetramerization is required for DNA-end resection and repair. Interacts (via the PXDLS motif) with CTBP1; the interaction is disrupted via binding of the adenovirus E1A to CTBP1. Component of the BRCA1-RBBP8 complex. Interacts (the Ser-326 phosphorylated form) with BRCA1 (via the C-terminal BRCT domains): the interaction occurs in the G2 phase, ubiquitinates RBBP8 and involves RBBP8 in BRCA1-dependent G2/M checkpoint control on DNA damage. Interacts with RB1. Interacts with the MRN complex. Interacts directly with MRE11; the interaction is required for efficient homologous recombination (HR) and regulation of the MRN complex. Interacts (when phosphorylated by CDK1) with NBN; promoting association with the MRN complex. Interacts with LMO4 (via the LIM zinc-binding 1 domain). Interacts with SIAH1. Interacts with RNF138. Interacts with EXD2. Interacts with CUL3 and KLHL15; this interaction leads to RBBP8 proteasomal degradation. Directly interacts with PIN1; this interaction depends upon RBBP8 phosphorylation, predominantly at Thr-315. Interacts with FZR1; this interaction leads to APC/C-mediated RBBP8 proteasomal degradation. Interacts with AUNIP; leading to recruit RBBP8 to sites of DNA damage. Interacts with SAMHD1. Interacts with HDGFL2. Post-translationally, hyperphosphorylation upon ionizing radiation results in dissociation from BRCA1. Phosphorylation at Thr-843 by CDK1 is essential for the recruitment to DNA and the DNA repair function. Phosphorylation at Thr-843 and Thr-855 promote interaction with NBN and recruitment to double-strand breaks (DSBs). Phosphorylated on Ser-326 as cells enter G2 phase. Phosphorylated at Ser-326 as cells enter G2 phase. This phosphorylation is required for binding BRCA1 and for the G2/M DNA damage transition checkpoint control. Phosphorylation at Thr-315 is required for PIN1-binding, while phosphorylation at Ser-276 serves as a PIN1 isomerization site. Phosphorylation at Thr-315 is cell-cycle dependent. It steadily increases during S phase, peaks at late S/G2 phase, and drops at G1. Phosphorylation is not required for tetramerization. Binds to DNA more strongly when dephosphorylated. Ubiquitinated. Ubiquitination at multiple sites by BRCA1 (via its N-terminal RING domain) does not lead to its proteasomal degradation but instead the ubiquitinated RBBP8 binds to chromatin following DNA damage and may play a role in G2/M checkpoint control. Ubiquitinated by RNF138 at its N-terminus. Ubiquitinated through 'Lys-48' by the E3 CUL3-KLHL15 complex; this modification leads to proteasomal degradation. Ubiquitinated by the E3 FZR1/APC/C complex; this modification leads to proteasomal degradation.

The protein localises to the nucleus. It is found in the chromosome. Functionally, endonuclease that cooperates with the MRE11-RAD50-NBN (MRN) complex in DNA-end resection, the first step of double-strand break (DSB) repair through the homologous recombination (HR) pathway. HR is restricted to S and G2 phases of the cell cycle and preferentially repairs DSBs resulting from replication fork collapse. Key determinant of DSB repair pathway choice, as it commits cells to HR by preventing classical non-homologous end-joining (NHEJ). Specifically promotes the endonuclease activity of the MRN complex to clear DNA ends containing protein adducts: recruited to DSBs by NBN following phosphorylation by CDK1, and promotes the endonuclease activity of MRE11 to clear protein-DNA adducts and generate clean double-strand break ends. Functions downstream of the MRN complex and ATM, promotes ATR activation and its recruitment to DSBs in the S/G2 phase facilitating the generation of ssDNA. Component of the BRCA1-RBBP8 complex that regulates CHEK1 activation and controls cell cycle G2/M checkpoints on DNA damage. During immunoglobulin heavy chain class-switch recombination, promotes microhomology-mediated alternative end joining (A-NHEJ) and plays an essential role in chromosomal translocations. Binds preferentially to DNA Y-junctions and to DNA substrates with blocked ends and promotes intermolecular DNA bridging. This Mus musculus (Mouse) protein is DNA endonuclease RBBP8 (Rbbp8).